Reading from the N-terminus, the 201-residue chain is Small ribosomal subunit protein uS4 (201 aa).

The 64-residue stretch at 93–156 (RRLDNMVYRL…KNLDIIKNAV (64 aa)) folds into the S4 RNA-binding domain.

The protein belongs to the universal ribosomal protein uS4 family. In terms of assembly, part of the 30S ribosomal subunit. Contacts protein S5. The interaction surface between S4 and S5 is involved in control of translational fidelity.

In terms of biological role, one of the primary rRNA binding proteins, it binds directly to 16S rRNA where it nucleates assembly of the body of the 30S subunit. Its function is as follows. With S5 and S12 plays an important role in translational accuracy. The sequence is that of Small ribosomal subunit protein uS4 from Limosilactobacillus reuteri subsp. reuteri (strain JCM 1112) (Lactobacillus reuteri).